A 470-amino-acid chain; its full sequence is ATP synthase subunit beta (470 aa).

Position 157–164 (157–164) interacts with ATP; it reads GGAGVGKT.

The protein belongs to the ATPase alpha/beta chains family. As to quaternary structure, F-type ATPases have 2 components, CF(1) - the catalytic core - and CF(0) - the membrane proton channel. CF(1) has five subunits: alpha(3), beta(3), gamma(1), delta(1), epsilon(1). CF(0) has three main subunits: a(1), b(2) and c(9-12). The alpha and beta chains form an alternating ring which encloses part of the gamma chain. CF(1) is attached to CF(0) by a central stalk formed by the gamma and epsilon chains, while a peripheral stalk is formed by the delta and b chains.

The protein resides in the cell inner membrane. The enzyme catalyses ATP + H2O + 4 H(+)(in) = ADP + phosphate + 5 H(+)(out). Functionally, produces ATP from ADP in the presence of a proton gradient across the membrane. The catalytic sites are hosted primarily by the beta subunits. This Geobacter sp. (strain M21) protein is ATP synthase subunit beta.